Consider the following 259-residue polypeptide: 5'-nucleotidase SurE (259 aa).

Residues Asp-8, Asp-9, Ser-40, and Asn-92 each contribute to the a divalent metal cation site.

The protein belongs to the SurE nucleotidase family. It depends on a divalent metal cation as a cofactor.

The protein localises to the cytoplasm. The enzyme catalyses a ribonucleoside 5'-phosphate + H2O = a ribonucleoside + phosphate. In terms of biological role, nucleotidase that shows phosphatase activity on nucleoside 5'-monophosphates. The protein is 5'-nucleotidase SurE of Xanthomonas euvesicatoria pv. vesicatoria (strain 85-10) (Xanthomonas campestris pv. vesicatoria).